Consider the following 37-residue polypeptide: Large ribosomal subunit protein bL36 (37 aa).

Belongs to the bacterial ribosomal protein bL36 family.

This chain is Large ribosomal subunit protein bL36, found in Acidothermus cellulolyticus (strain ATCC 43068 / DSM 8971 / 11B).